An 868-amino-acid polypeptide reads, in one-letter code: Receptor-like protein 32 (868 aa).

Residues 1–32 form the signal peptide; it reads MKDSWNSTSIIPFTFSSLIFFLFTFDFQDVFG. The Extracellular segment spans residues 33 to 815; it reads VPTKHLCRLE…PPELEEEDRE (783 aa). Asn73, Asn109, Asn141, and Asn165 each carry an N-linked (GlcNAc...) asparagine glycan. LRR repeat units lie at residues 118–142, 143–166, 168–188, 189–213, 214–237, 239–261, 262–285, 287–310, 312–334, 335–360, 362–385, 389–412, 413–436, 438–459, 465–489, 490–515, 517–538, 540–560, 561–586, 588–606, 607–630, 675–699, 700–723, 724–747, and 749–772; these read LRFL…IENF, SHLT…IGNL, QLTF…FFGN, MNQL…LLNL, KHLS…MSSL, NLEY…LFTI, ASLT…NISS, STLT…ISKF, NLQD…IFTN, LKSL…LFSS, LNSI…SVAD, TQLI…LRSQ, HKMT…LWTL, KLIF…TEHG, KPSM…ICAL, RSLI…NLKS, LSFL…IFKS, RSLD…FIRL, SALE…SLKK, QVLV…HASF, HTLR…YFVN, LKIY…IGLL, KELH…MGNL, RELE…LGNL, and YLAY…QFRR. Asn233 is a glycosylation site (N-linked (GlcNAc...) asparagine). 2 N-linked (GlcNAc...) asparagine glycosylation sites follow: Asn275 and Asn282. 2 N-linked (GlcNAc...) asparagine glycosylation sites follow: Asn342 and Asn347. N-linked (GlcNAc...) asparagine glycosylation is found at Asn477 and Asn503. An N-linked (GlcNAc...) asparagine glycan is attached at Asn574. A glycan (N-linked (GlcNAc...) asparagine) is linked at Asn613. Residues Asn706, Asn746, Asn754, and Asn774 are each glycosylated (N-linked (GlcNAc...) asparagine). Residues 816 to 836 traverse the membrane as a helical segment; it reads VFSWIAAAIGFGPGIAFGLTI. At 837 to 868 the chain is on the cytoplasmic side; the sequence is RYILVFYKPDWFMHTFGHLQPSAHEKRLRRKQ.

It belongs to the RLP family.

The protein localises to the cell membrane. The polypeptide is Receptor-like protein 32 (Arabidopsis thaliana (Mouse-ear cress)).